Consider the following 37-residue polypeptide: Large ribosomal subunit protein bL36 (37 aa).

Belongs to the bacterial ribosomal protein bL36 family.

The polypeptide is Large ribosomal subunit protein bL36 (Streptomyces avermitilis (strain ATCC 31267 / DSM 46492 / JCM 5070 / NBRC 14893 / NCIMB 12804 / NRRL 8165 / MA-4680)).